Here is a 488-residue protein sequence, read N- to C-terminus: Integrin beta-like protein 1 (488 aa).

Positions 1–21 (MHAGAFINFVWALSLVSLLAA) are cleaved as a signal peptide. Disulfide bonds link Cys38–Cys65, Cys49–Cys63, Cys57–Cys68, Cys70–Cys83, Cys85–Cys106, Cys90–Cys104, Cys98–Cys109, Cys111–Cys120, Cys126–Cys153, Cys137–Cys151, Cys145–Cys156, Cys158–Cys172, Cys174–Cys196, Cys179–Cys194, Cys188–Cys199, Cys201–Cys210, Cys214–Cys241, Cys225–Cys239, Cys233–Cys244, Cys246–Cys263, Cys265–Cys290, Cys270–Cys288, Cys282–Cys293, Cys295–Cys304, Cys310–Cys337, Cys321–Cys335, Cys329–Cys340, Cys342–Cys355, Cys357–Cys378, Cys362–Cys376, Cys370–Cys381, Cys383–Cys392, Cys398–Cys425, Cys409–Cys423, Cys417–Cys428, Cys430–Cys442, Cys444–Cys465, Cys449–Cys463, Cys457–Cys468, and Cys470–Cys479. 10 consecutive I-EGF domains span residues 38-84 (CRLP…PLCE), 85-121 (CHDW…EACQ), 126-173 (CDLT…KYCE), 174-211 (CDDT…DKCE), 214-264 (CDIT…DTCE), 265-305 (CDER…RKCE), 310-356 (CALS…KNCE), 357-393 (CDDR…KLCQ), 398-443 (CNMT…EFCE), and 444-480 (CDDR…NACE). Residues 49–89 (CRTPDGSICSGRGSCDCGICLCEVKEAGKYYGPLCECHDWV) form an I repeat. Residues 49–488 (CRTPDGSICS…CEIWLGSEYP (440 aa)) are cysteine-rich tandem repeats. The stretch at 90 to 136 (CHTYDGQVCAGHGQCDCGVCKCDVGWSGEACQYPTTCDLTRKKSNEM) is one II repeat. The III repeat unit spans residues 137–178 (CKNSQAVICSNAGTCQCGRCKCENSDNSGLIYGKYCECDDTE). The stretch at 179–224 (CFDDETQEICGGHGKCYCGNCYCEAGWHGDKCEFQCDITPWEIKKR) is one IV repeat. The stretch at 225-269 (CTSPDGKICSNRGTCVCGECTCHDVDPTGDWGDIHGDTCECDERN) is one V repeat. The VI repeat unit spans residues 270–320 (CKSVYDRYSDDFCSGHGQCNCGRCDCKDGWTGRKCEHPRACALSIEESKKK). A VII repeat occupies 321-361 (CQGSASQPCSGRGKCECGQCTCFPPGDSKVYGKNCECDDRQ). The VIII repeat unit spans residues 362–408 (CEDLEGKICGEHGTCSCGRCICEAGWFGKLCQHERKCNMTEEESKSQ). Asn399 carries an N-linked (GlcNAc...) asparagine glycan. The stretch at 409 to 448 (CESDDGILCSGKGSCHCGKCICSPQEWYVSGEFCECDDRD) is one IX repeat. One copy of the X repeat lies at 449–488 (CDKHDGLICTGNGICNCGNCECWEGWNGNACEIWLGSEYP).

Its subcellular location is the secreted. The sequence is that of Integrin beta-like protein 1 (itgbl1) from Xenopus laevis (African clawed frog).